The sequence spans 180 residues: Translation initiation factor IF-3 (180 aa).

The protein belongs to the IF-3 family. In terms of assembly, monomer.

It is found in the cytoplasm. In terms of biological role, IF-3 binds to the 30S ribosomal subunit and shifts the equilibrium between 70S ribosomes and their 50S and 30S subunits in favor of the free subunits, thus enhancing the availability of 30S subunits on which protein synthesis initiation begins. The sequence is that of Translation initiation factor IF-3 from Shewanella baltica (strain OS223).